Here is a 422-residue protein sequence, read N- to C-terminus: Protein phosphatase methylesterase 1 (422 aa).

The interval 1 to 27 (MSDMFRKSVLNKLPHLPPTRAPWADES) is disordered. Active-site residues include Ser-207, Asp-234, and His-371.

The protein belongs to the AB hydrolase superfamily.

It carries out the reaction [phosphatase 2A protein]-C-terminal L-leucine methyl ester + H2O = [phosphatase 2A protein]-C-terminal L-leucine + methanol + H(+). In terms of biological role, demethylates proteins that have been reversibly carboxymethylated. Demethylates the phosphatase PP2A catalytic subunit. The sequence is that of Protein phosphatase methylesterase 1 (PPE1) from Cryptococcus neoformans var. neoformans serotype D (strain B-3501A) (Filobasidiella neoformans).